Reading from the N-terminus, the 450-residue chain is UDP-N-acetylmuramoylalanine--D-glutamate ligase (450 aa).

Gly-111–Thr-117 contacts ATP.

The protein belongs to the MurCDEF family.

It is found in the cytoplasm. It catalyses the reaction UDP-N-acetyl-alpha-D-muramoyl-L-alanine + D-glutamate + ATP = UDP-N-acetyl-alpha-D-muramoyl-L-alanyl-D-glutamate + ADP + phosphate + H(+). The protein operates within cell wall biogenesis; peptidoglycan biosynthesis. In terms of biological role, cell wall formation. Catalyzes the addition of glutamate to the nucleotide precursor UDP-N-acetylmuramoyl-L-alanine (UMA). This chain is UDP-N-acetylmuramoylalanine--D-glutamate ligase, found in Rickettsia bellii (strain RML369-C).